A 603-amino-acid polypeptide reads, in one-letter code: Mitochondrial distribution and morphology protein 34 (603 aa).

In terms of domain architecture, SMP-LTD spans Met1–Glu205. Over residues Lys320–Gly332 the composition is skewed to low complexity. Disordered stretches follow at residues Lys320 to Arg511 and Ile558 to Ala603. Over residues Asn333–Gly351 the composition is skewed to polar residues. The span at Val371–Ala380 shows a compositional bias: basic and acidic residues. A compositionally biased stretch (polar residues) spans Gly383 to Val403. Low complexity predominate over residues Pro452–Ala463. Positions Arg500–Leu509 are enriched in polar residues. A compositionally biased stretch (basic and acidic residues) spans Ile558–Ser570.

It belongs to the MDM34 family. In terms of assembly, component of the ER-mitochondria encounter structure (ERMES) or MDM complex, composed of mmm1, mdm10, mdm12 and mdm34.

It is found in the mitochondrion outer membrane. Component of the ERMES/MDM complex, which serves as a molecular tether to connect the endoplasmic reticulum (ER) and mitochondria. Components of this complex are involved in the control of mitochondrial shape and protein biogenesis, and function in nonvesicular lipid trafficking between the ER and mitochondria. Mdm34 is required for the interaction of the ER-resident membrane protein mmm1 and the outer mitochondrial membrane-resident beta-barrel protein mdm10. This is Mitochondrial distribution and morphology protein 34 from Pyrenophora tritici-repentis (strain Pt-1C-BFP) (Wheat tan spot fungus).